The primary structure comprises 191 residues: Shikimate kinase (191 aa).

24 to 29 (GSGKTS) provides a ligand contact to ATP. Residue threonine 28 participates in Mg(2+) binding. Substrate-binding residues include aspartate 46, arginine 70, and glycine 92. Arginine 130 lines the ATP pocket. Arginine 149 provides a ligand contact to substrate.

It belongs to the shikimate kinase family. As to quaternary structure, monomer. It depends on Mg(2+) as a cofactor.

It is found in the cytoplasm. The enzyme catalyses shikimate + ATP = 3-phosphoshikimate + ADP + H(+). Its pathway is metabolic intermediate biosynthesis; chorismate biosynthesis; chorismate from D-erythrose 4-phosphate and phosphoenolpyruvate: step 5/7. Its function is as follows. Catalyzes the specific phosphorylation of the 3-hydroxyl group of shikimic acid using ATP as a cosubstrate. The polypeptide is Shikimate kinase (Synechococcus sp. (strain CC9902)).